The following is a 396-amino-acid chain: Ribosomal RNA large subunit methyltransferase I (396 aa).

One can recognise a PUA domain in the interval 2-81; the sequence is SVRLVLAKGR…ESIDIAFFSR (80 aa).

This sequence belongs to the methyltransferase superfamily. RlmI family.

The protein localises to the cytoplasm. The catalysed reaction is cytidine(1962) in 23S rRNA + S-adenosyl-L-methionine = 5-methylcytidine(1962) in 23S rRNA + S-adenosyl-L-homocysteine + H(+). Its function is as follows. Specifically methylates the cytosine at position 1962 (m5C1962) of 23S rRNA. This Shigella flexneri protein is Ribosomal RNA large subunit methyltransferase I.